The sequence spans 257 residues: 5'-nucleotidase SurE (257 aa).

4 residues coordinate a divalent metal cation: Asp8, Asp9, Ser40, and Asn97.

Belongs to the SurE nucleotidase family. The cofactor is a divalent metal cation.

The protein localises to the cytoplasm. It carries out the reaction a ribonucleoside 5'-phosphate + H2O = a ribonucleoside + phosphate. Nucleotidase that shows phosphatase activity on nucleoside 5'-monophosphates. The sequence is that of 5'-nucleotidase SurE from Desulforudis audaxviator (strain MP104C).